The sequence spans 316 residues: Tetrahydromethanopterin S-methyltransferase subunit H (316 aa).

Belongs to the MtrH family. The complex is composed of 8 subunits; MtrA, MtrB, MtrC, MtrD, MtrE, MtrF, MtrG and MtrH.

It catalyses the reaction 5-methyl-5,6,7,8-tetrahydromethanopterin + coenzyme M + 2 Na(+)(in) = 5,6,7,8-tetrahydromethanopterin + methyl-coenzyme M + 2 Na(+)(out). It functions in the pathway one-carbon metabolism; methanogenesis from CO(2); methyl-coenzyme M from 5,10-methylene-5,6,7,8-tetrahydromethanopterin: step 2/2. In terms of biological role, part of a complex that catalyzes the formation of methyl-coenzyme M and tetrahydromethanopterin from coenzyme M and methyl-tetrahydromethanopterin. This is an energy-conserving, sodium-ion translocating step. MtrH catalyzes the transfer of the methyl group from methyl-tetrahydromethanopterin to the corrinoid prosthetic group of MtrA. In Methanosarcina barkeri (strain Fusaro / DSM 804), this protein is Tetrahydromethanopterin S-methyltransferase subunit H.